The sequence spans 469 residues: Putative dipeptidase SH1171 (469 aa).

His-84 is a binding site for Zn(2+). Asp-86 is a catalytic residue. Asp-115 is a binding site for Zn(2+). Catalysis depends on Glu-149, which acts as the Proton acceptor. Zn(2+) is bound by residues Glu-150, Asp-173, and His-440.

Belongs to the peptidase M20A family. The cofactor is Zn(2+).

The polypeptide is Putative dipeptidase SH1171 (Staphylococcus haemolyticus (strain JCSC1435)).